We begin with the raw amino-acid sequence, 495 residues long: Glutamate--tRNA ligase 1 (495 aa).

The short motif at 10–20 (PSPTGALHMGG) is the 'HIGH' region element. A 'KMSKS' region motif is present at residues 251–255 (KLSKR). Residue Lys-254 coordinates ATP.

This sequence belongs to the class-I aminoacyl-tRNA synthetase family. Glutamate--tRNA ligase type 1 subfamily. In terms of assembly, monomer.

It is found in the cytoplasm. The catalysed reaction is tRNA(Glu) + L-glutamate + ATP = L-glutamyl-tRNA(Glu) + AMP + diphosphate. In terms of biological role, catalyzes the attachment of glutamate to tRNA(Glu) in a two-step reaction: glutamate is first activated by ATP to form Glu-AMP and then transferred to the acceptor end of tRNA(Glu). The chain is Glutamate--tRNA ligase 1 from Syntrophomonas wolfei subsp. wolfei (strain DSM 2245B / Goettingen).